Reading from the N-terminus, the 87-residue chain is Cell division topological specificity factor (87 aa).

This sequence belongs to the MinE family.

Prevents the cell division inhibition by proteins MinC and MinD at internal division sites while permitting inhibition at polar sites. This ensures cell division at the proper site by restricting the formation of a division septum at the midpoint of the long axis of the cell. The polypeptide is Cell division topological specificity factor (Roseiflexus sp. (strain RS-1)).